Reading from the N-terminus, the 847-residue chain is UPF0182 protein CYB_0372 (847 aa).

7 helical membrane-spanning segments follow: residues 7 to 27, 51 to 71, 76 to 96, 141 to 161, 168 to 188, 220 to 240, and 259 to 279; these read GLFLLLGVGLGILAITGLAAF, WGLGLGAFLFALAVTGSNICS, ATLAGAWAIATGLSVFFAGSL, FNLVLLTLIAVVLIYLVELGL, LALSLYAQRHLLILGGSLFLI, LPATTLMSGVAGLTAVGFWAL, and WASSLLAPAILWGAYLGFGLL.

This sequence belongs to the UPF0182 family.

The protein localises to the cell membrane. In Synechococcus sp. (strain JA-2-3B'a(2-13)) (Cyanobacteria bacterium Yellowstone B-Prime), this protein is UPF0182 protein CYB_0372.